Reading from the N-terminus, the 391-residue chain is 4-hydroxy-3-methylbut-2-en-1-yl diphosphate synthase (flavodoxin) (391 aa).

The [4Fe-4S] cluster site is built by Cys281, Cys284, Cys316, and Glu323. The segment at 372–391 is disordered; that stretch reads EMGGEDGQGGIKGSPVVSVS.

The protein belongs to the IspG family. It depends on [4Fe-4S] cluster as a cofactor.

The catalysed reaction is (2E)-4-hydroxy-3-methylbut-2-enyl diphosphate + oxidized [flavodoxin] + H2O + 2 H(+) = 2-C-methyl-D-erythritol 2,4-cyclic diphosphate + reduced [flavodoxin]. It functions in the pathway isoprenoid biosynthesis; isopentenyl diphosphate biosynthesis via DXP pathway; isopentenyl diphosphate from 1-deoxy-D-xylulose 5-phosphate: step 5/6. Its function is as follows. Converts 2C-methyl-D-erythritol 2,4-cyclodiphosphate (ME-2,4cPP) into 1-hydroxy-2-methyl-2-(E)-butenyl 4-diphosphate. The polypeptide is 4-hydroxy-3-methylbut-2-en-1-yl diphosphate synthase (flavodoxin) (Renibacterium salmoninarum (strain ATCC 33209 / DSM 20767 / JCM 11484 / NBRC 15589 / NCIMB 2235)).